The chain runs to 24 residues: Fibrinogen gamma chain (24 aa).

In terms of assembly, heterohexamer; disulfide linked. Contains 2 sets of 3 non-identical chains (alpha, beta and gamma). The 2 heterotrimers are in head to head conformation with the N-termini in a small central domain. Post-translationally, conversion of fibrinogen to fibrin is triggered by thrombin, which cleaves fibrinopeptides A and B from alpha and beta chains, and thus exposes the N-terminal polymerization sites responsible for the formation of the soft clot. The soft clot is converted into the hard clot by factor XIIIA which catalyzes the epsilon-(gamma-glutamyl)lysine cross-linking between gamma chains (stronger) and between alpha chains (weaker) of different monomers.

It localises to the secreted. Together with fibrinogen alpha (FGA) and fibrinogen beta (FGB), polymerizes to form an insoluble fibrin matrix. Has a major function in hemostasis as one of the primary components of blood clots. In addition, functions during the early stages of wound repair to stabilize the lesion and guide cell migration during re-epithelialization. Was originally thought to be essential for platelet aggregation, based on in vitro studies using anticoagulated blood. However, subsequent studies have shown that it is not absolutely required for thrombus formation in vivo. Enhances expression of SELP in activated platelets via an ITGB3-dependent pathway. Maternal fibrinogen is essential for successful pregnancy. Fibrin deposition is also associated with infection, where it protects against IFNG-mediated hemorrhage. May also facilitate the antibacterial immune response via both innate and T-cell mediated pathways. The polypeptide is Fibrinogen gamma chain (FGG) (Canis lupus familiaris (Dog)).